Here is a 476-residue protein sequence, read N- to C-terminus: Ribulose bisphosphate carboxylase large chain (476 aa).

Positions 124 and 174 each coordinate substrate. Lys-176 serves as the catalytic Proton acceptor. Lys-178 is a binding site for substrate. Mg(2+) is bound by residues Lys-202, Asp-204, and Glu-205. Lys-202 carries the post-translational modification N6-carboxylysine. His-295 functions as the Proton acceptor in the catalytic mechanism. Positions 296, 328, and 380 each coordinate substrate.

It belongs to the RuBisCO large chain family. Type I subfamily. In terms of assembly, heterohexadecamer of 8 large chains and 8 small chains; disulfide-linked. The disulfide link is formed within the large subunit homodimers. The cofactor is Mg(2+). Post-translationally, the disulfide bond which can form in the large chain dimeric partners within the hexadecamer appears to be associated with oxidative stress and protein turnover.

The protein localises to the carboxysome. The catalysed reaction is 2 (2R)-3-phosphoglycerate + 2 H(+) = D-ribulose 1,5-bisphosphate + CO2 + H2O. The enzyme catalyses D-ribulose 1,5-bisphosphate + O2 = 2-phosphoglycolate + (2R)-3-phosphoglycerate + 2 H(+). RuBisCO catalyzes two reactions: the carboxylation of D-ribulose 1,5-bisphosphate, the primary event in carbon dioxide fixation, as well as the oxidative fragmentation of the pentose substrate in the photorespiration process. Both reactions occur simultaneously and in competition at the same active site. The chain is Ribulose bisphosphate carboxylase large chain from Cyanothece sp. (strain PCC 7425 / ATCC 29141).